The following is a 171-amino-acid chain: AAF/I fimbrial subunit (171 aa).

Positions methionine 1 to alanine 28 are cleaved as a signal peptide.

It is found in the fimbrium. This Escherichia coli protein is AAF/I fimbrial subunit (aggA).